The chain runs to 152 residues: Putative polyketide cyclase (152 aa).

This sequence to polyketide cyclases.

It participates in antibiotic biosynthesis; curamycin biosynthesis. This Streptomyces cyaneus (Streptomyces curacoi) protein is Putative polyketide cyclase (curF).